The following is a 499-amino-acid chain: Beta-amylase (499 aa).

Positions 55, 95, and 103 each coordinate substrate. The active-site Proton donor is the Glu-188. Substrate contacts are provided by Lys-298, His-303, and Thr-345. Glu-383 functions as the Proton acceptor in the catalytic mechanism. Substrate-binding positions include 384–385 (NA) and Arg-423.

This sequence belongs to the glycosyl hydrolase 14 family. As to quaternary structure, homotetramer.

It catalyses the reaction Hydrolysis of (1-&gt;4)-alpha-D-glucosidic linkages in polysaccharides so as to remove successive maltose units from the non-reducing ends of the chains.. This chain is Beta-amylase (BMY1), found in Ipomoea batatas (Sweet potato).